Reading from the N-terminus, the 221-residue chain is UPF0502 protein Sputcn32_1644 (221 aa).

It belongs to the UPF0502 family.

The polypeptide is UPF0502 protein Sputcn32_1644 (Shewanella putrefaciens (strain CN-32 / ATCC BAA-453)).